Here is a 370-residue protein sequence, read N- to C-terminus: Mitogen-activated protein kinase 3 (370 aa).

One can recognise a Protein kinase domain in the interval 32-319 (YVPIKPIGRG…VTEALEHPYM (288 aa)). Residues 38 to 46 (IGRGAYGIV) and lysine 61 each bind ATP. Aspartate 158 serves as the catalytic Proton acceptor. Phosphothreonine is present on threonine 191. The short motif at 191–193 (TEY) is the TXY element. Phosphotyrosine is present on tyrosine 193.

Belongs to the protein kinase superfamily. CMGC Ser/Thr protein kinase family. MAP kinase subfamily. In terms of processing, dually phosphorylated on Thr-191 and Tyr-193, which activates the enzyme.

It catalyses the reaction L-seryl-[protein] + ATP = O-phospho-L-seryl-[protein] + ADP + H(+). It carries out the reaction L-threonyl-[protein] + ATP = O-phospho-L-threonyl-[protein] + ADP + H(+). Its activity is regulated as follows. Activated by threonine and tyrosine phosphorylation. The protein is Mitogen-activated protein kinase 3 (MPK3) of Oryza sativa subsp. japonica (Rice).